The chain runs to 215 residues: Large ribosomal subunit protein uL16m (215 aa).

The N-terminal 36 residues, 1–36 (MALQQYNKFPFFFSGILGPTRLNGLQMPPIQTMVRW), are a transit peptide targeting the mitochondrion.

Belongs to the universal ribosomal protein uL16 family. Component of the mitochondrial large ribosomal subunit (mt-LSU). Mature yeast 74S mitochondrial ribosomes consist of a small (37S) and a large (54S) subunit. The 37S small subunit contains a 15S ribosomal RNA (15S mt-rRNA) and at least 32 different proteins. The 54S large subunit contains a 21S rRNA (21S mt-rRNA) and at least 45 different proteins.

The protein resides in the mitochondrion. Its function is as follows. Component of the mitochondrial ribosome (mitoribosome), a dedicated translation machinery responsible for the synthesis of mitochondrial genome-encoded proteins, including at least some of the essential transmembrane subunits of the mitochondrial respiratory chain. The mitoribosomes are attached to the mitochondrial inner membrane and translation products are cotranslationally integrated into the membrane. This is Large ribosomal subunit protein uL16m (mrpl16) from Schizosaccharomyces pombe (strain 972 / ATCC 24843) (Fission yeast).